The primary structure comprises 144 residues: UPF0735 ACT domain-containing protein NT01CX_1681 (144 aa).

The 76-residue stretch at 68 to 143 (TIGFLLSHKA…NVVKVSLIAM (76 aa)) folds into the ACT domain.

It belongs to the UPF0735 family.

This Clostridium novyi (strain NT) protein is UPF0735 ACT domain-containing protein NT01CX_1681.